The sequence spans 67 residues: Large ribosomal subunit protein bL35 (67 aa).

It belongs to the bacterial ribosomal protein bL35 family.

The polypeptide is Large ribosomal subunit protein bL35 (Bartonella henselae (strain ATCC 49882 / DSM 28221 / CCUG 30454 / Houston 1) (Rochalimaea henselae)).